Here is a 213-residue protein sequence, read N- to C-terminus: A-type ATP synthase subunit D (213 aa).

This sequence belongs to the V-ATPase D subunit family. Has multiple subunits with at least A(3), B(3), C, D, E, F, H, I and proteolipid K(x).

The protein resides in the cell membrane. Its function is as follows. Component of the A-type ATP synthase that produces ATP from ADP in the presence of a proton gradient across the membrane. The protein is A-type ATP synthase subunit D of Saccharolobus solfataricus (strain ATCC 35092 / DSM 1617 / JCM 11322 / P2) (Sulfolobus solfataricus).